The primary structure comprises 102 residues: Large ribosomal subunit protein bL21 (102 aa).

Belongs to the bacterial ribosomal protein bL21 family. As to quaternary structure, part of the 50S ribosomal subunit. Contacts protein L20.

In terms of biological role, this protein binds to 23S rRNA in the presence of protein L20. This is Large ribosomal subunit protein bL21 from Photorhabdus laumondii subsp. laumondii (strain DSM 15139 / CIP 105565 / TT01) (Photorhabdus luminescens subsp. laumondii).